The following is a 490-amino-acid chain: Asparagine--tRNA ligase (490 aa).

It belongs to the class-II aminoacyl-tRNA synthetase family. In terms of assembly, homodimer.

It localises to the cytoplasm. The enzyme catalyses tRNA(Asn) + L-asparagine + ATP = L-asparaginyl-tRNA(Asn) + AMP + diphosphate + H(+). This is Asparagine--tRNA ligase from Rhodopirellula baltica (strain DSM 10527 / NCIMB 13988 / SH1).